A 76-amino-acid chain; its full sequence is Dermaseptin-SP2 (76 aa).

An N-terminal signal peptide occupies residues 1-22 (MAFLKKSLFLVLFLGLVSLSIC). The propeptide occupies 23-45 (EEEKRENEDEEEQEDEEQSEEKR). The interval 24–44 (EEKRENEDEEEQEDEEQSEEK) is disordered. Positions 30–41 (EDEEEQEDEEQS) are enriched in acidic residues. Q73 carries the glutamine amide modification. Residues 74-76 (GEQ) constitute a propeptide that is removed on maturation.

Expressed by the skin glands.

Its subcellular location is the secreted. The protein localises to the target cell membrane. Its function is as follows. Antimicrobial peptide with activity against Gram-positive and Gram-negative bacteria and fungi. Has been tested against E.coli (MIC=2.68-8 uM), S.aureus (ATCC 25923, MIC=2.68-8 uM), S.aureus (ATCC oxacillin resistant, MIC=2.68 uM), K.pneumoniae (MIC=10.71 uM) and C.albicans (MIC=10.71-32 uM). Probably acts by disturbing membrane functions with its alpha-helical amphipathic structure. May penetrate bacterial membranes, but stay at the mammalian membrane surface. Shows a very weak hemolytic activity. This Agalychnis spurrelli (Gliding leaf frog) protein is Dermaseptin-SP2.